The primary structure comprises 370 residues: Quinolinate synthase (370 aa).

Residues H62 and S83 each contribute to the iminosuccinate site. C128 lines the [4Fe-4S] cluster pocket. Iminosuccinate is bound by residues 154 to 156 and S171; that span reads YAN. A [4Fe-4S] cluster-binding site is contributed by C215. Residues 241 to 243 and T258 each bind iminosuccinate; that span reads HPE. [4Fe-4S] cluster is bound at residue C312.

It belongs to the quinolinate synthase family. Type 1 subfamily. The cofactor is [4Fe-4S] cluster.

The protein resides in the cytoplasm. It carries out the reaction iminosuccinate + dihydroxyacetone phosphate = quinolinate + phosphate + 2 H2O + H(+). The protein operates within cofactor biosynthesis; NAD(+) biosynthesis; quinolinate from iminoaspartate: step 1/1. Its function is as follows. Catalyzes the condensation of iminoaspartate with dihydroxyacetone phosphate to form quinolinate. This Neisseria meningitidis serogroup C / serotype 2a (strain ATCC 700532 / DSM 15464 / FAM18) protein is Quinolinate synthase.